The following is a 280-amino-acid chain: MVVKVGIAKLGNIASGVMGELLLDERADREDMITFMATSGTKLQPEDIERVVSNMKAWGPDFCIVVSPNGVLPGPTQAREDLAAAGIPCIVITDDVTTKKEQFEALKASNFGYIIMKADAMIGARREFLDPIEMADYNGNLVKVLALTGAFRKMQMELDKVIDQVKAGKKGADLALPKVVMTSDKAVDGEFSNPYALAKARAAYEIAQSVAGVNVKGCFMTKEWEKYIPIVASAHEMMRQAMLLCEEARTLEKGVDAVIRKPHKKTGEIVSKTALISKPE.

It belongs to the MTD family.

It carries out the reaction 5,10-methylenetetrahydromethanopterin + oxidized coenzyme F420-(gamma-L-Glu)(n) + 2 H(+) = 5,10-methenyl-5,6,7,8-tetrahydromethanopterin + reduced coenzyme F420-(gamma-L-Glu)(n). It functions in the pathway one-carbon metabolism; methanogenesis from CO(2); 5,10-methylene-5,6,7,8-tetrahydromethanopterin from 5,10-methenyl-5,6,7,8-tetrahydromethanopterin (coenzyme F420 route): step 1/1. Functionally, catalyzes the reversible reduction of methenyl-H(4)MPT(+) to methylene-H(4)MPT. This Methanoculleus marisnigri (strain ATCC 35101 / DSM 1498 / JR1) protein is F420-dependent methylenetetrahydromethanopterin dehydrogenase.